The following is a 549-amino-acid chain: Plant intracellular Ras-group-related LRR protein 4 (549 aa).

The segment covering 119 to 140 has biased composition (low complexity); it reads SPSSNGSVSSRPPLPPATTTAA. Positions 119–167 are disordered; that stretch reads SPSSNGSVSSRPPLPPATTTAARSDSQSSLNFSERAPVRPKDMVSRDDS. Residues 141–150 are compositionally biased toward polar residues; the sequence is RSDSQSSLNF. Over residues 154–167 the composition is skewed to basic and acidic residues; that stretch reads APVRPKDMVSRDDS. Phosphoserine is present on serine 167. 11 LRR repeats span residues 245-268, 269-291, 293-313, 314-337, 339-360, 362-383, 384-406, 407-430, 432-454, 455-476, and 478-500; these read LSSLTSLDLSENHIVVLPNTIGGL, SSLTKLDLHSNRIGQLPESIGEL, NLVYLNLGSNQLSSLPSAFSR, LVRLEELDLSCNNLPILPESIGSL, SLKKLDVETNDIEEIPYSIGGC, SLIELRADYNKLKALPEAIGKI, TTLEILSVRYNNIRQLPTTMSSL, ASLKELDVSFNELESVPESLCFAT, LVKLNIGNNFADMVSLPRSIGNL, EMLEELDISNNQIRVLPDSFKM, and TKLRVFRAQENPLHIPPRDIAEK. Residues 501-508 carry the GVYW; degenerate motif; the sequence is GPQAVVQY.

The protein belongs to the SHOC2 family. Widely expressed.

Functionally, leucine-rich repeat protein that likely mediates protein interactions, possibly in the context of signal transduction. This Arabidopsis thaliana (Mouse-ear cress) protein is Plant intracellular Ras-group-related LRR protein 4 (PIRL4).